Consider the following 56-residue polypeptide: Preprotein translocase subunit SecG (56 aa).

The Cytoplasmic portion of the chain corresponds to 1 to 30 (MARKDKKTLPASGAGIVRYFNDDTAGVKLS). Residues 31-52 (PKQVVIGTIIVALICIALRFTT) form a helical membrane-spanning segment. Over 53–56 (SVGY) the chain is Extracellular.

The protein belongs to the SEC61-beta family. As to quaternary structure, component of the protein translocase complex. Heterotrimer consisting of alpha (SecY), beta (SecG) and gamma (SecE) subunits. Can form oligomers of the heterotrimer.

Its subcellular location is the cell membrane. Functionally, involved in protein export. The function of the beta subunit is unknown, but it may be involved in stabilization of the trimeric complex. This Methanosphaera stadtmanae (strain ATCC 43021 / DSM 3091 / JCM 11832 / MCB-3) protein is Preprotein translocase subunit SecG.